Reading from the N-terminus, the 430-residue chain is Ribosomal protein uS12 methylthiotransferase RimO (430 aa).

The 116-residue stretch at 1 to 116 (MRVGIKVLGC…IANALEKGTD (116 aa)) folds into the MTTase N-terminal domain. 6 residues coordinate [4Fe-4S] cluster: Cys-10, Cys-46, Cys-79, Cys-148, Cys-152, and Cys-155. Positions 134-365 (LEERPYAYVK…LLQAEISNSR (232 aa)) constitute a Radical SAM core domain. A TRAM domain is found at 367–430 (DRFIGRKLKF…DEYDMWGSVT (64 aa)).

Belongs to the methylthiotransferase family. RimO subfamily. [4Fe-4S] cluster serves as cofactor.

It is found in the cytoplasm. The catalysed reaction is L-aspartate(89)-[ribosomal protein uS12]-hydrogen + (sulfur carrier)-SH + AH2 + 2 S-adenosyl-L-methionine = 3-methylsulfanyl-L-aspartate(89)-[ribosomal protein uS12]-hydrogen + (sulfur carrier)-H + 5'-deoxyadenosine + L-methionine + A + S-adenosyl-L-homocysteine + 2 H(+). Its function is as follows. Catalyzes the methylthiolation of an aspartic acid residue of ribosomal protein uS12. In Thermotoga sp. (strain RQ2), this protein is Ribosomal protein uS12 methylthiotransferase RimO.